Consider the following 496-residue polypeptide: Rhamnulokinase (496 aa).

13–17 (ASSGR) provides a ligand contact to ATP. Residues glycine 83 and 236–238 (HDT) each bind substrate. Aspartate 237 functions as the Proton acceptor in the catalytic mechanism. Threonine 259 serves as a coordination point for ATP. A substrate-binding site is contributed by asparagine 296. Residue glutamine 304 coordinates ATP. A disulfide bond links cysteine 353 and cysteine 370. Glycine 402 lines the ATP pocket. Cysteine 413 and cysteine 417 are oxidised to a cystine.

Belongs to the rhamnulokinase family. The cofactor is Mg(2+).

It carries out the reaction L-rhamnulose + ATP = L-rhamnulose 1-phosphate + ADP + H(+). It functions in the pathway carbohydrate degradation; L-rhamnose degradation; glycerone phosphate from L-rhamnose: step 2/3. In terms of biological role, involved in the catabolism of L-rhamnose (6-deoxy-L-mannose). Catalyzes the transfer of the gamma-phosphate group from ATP to the 1-hydroxyl group of L-rhamnulose to yield L-rhamnulose 1-phosphate. The protein is Rhamnulokinase of Pectobacterium atrosepticum (strain SCRI 1043 / ATCC BAA-672) (Erwinia carotovora subsp. atroseptica).